Consider the following 475-residue polypeptide: Ubiquilin-like protein (475 aa).

The region spanning 31–105 (TRVIVKTAGN…IYLVIKSKQG (75 aa)) is the Ubiquitin-like domain. Disordered stretches follow at residues 113 to 138 (FRDLPTNDPCHRDRNTKGNSSRVHQP) and 305 to 325 (QVQSSPPPPPPSQEQQDQLTQ). Residues 129–138 (KGNSSRVHQP) show a composition bias toward polar residues.

This is Ubiquilin-like protein (UBQLNL) from Homo sapiens (Human).